The chain runs to 306 residues: Aspartate carbamoyltransferase catalytic subunit (306 aa).

Arg-56 and Thr-57 together coordinate carbamoyl phosphate. Lys-84 serves as a coordination point for L-aspartate. Carbamoyl phosphate-binding residues include Arg-106, His-136, and Gln-139. The L-aspartate site is built by Arg-169 and Arg-221. 2 residues coordinate carbamoyl phosphate: Ala-262 and Pro-263.

The protein belongs to the aspartate/ornithine carbamoyltransferase superfamily. ATCase family. As to quaternary structure, heterododecamer (2C3:3R2) of six catalytic PyrB chains organized as two trimers (C3), and six regulatory PyrI chains organized as three dimers (R2).

It catalyses the reaction carbamoyl phosphate + L-aspartate = N-carbamoyl-L-aspartate + phosphate + H(+). The protein operates within pyrimidine metabolism; UMP biosynthesis via de novo pathway; (S)-dihydroorotate from bicarbonate: step 2/3. Catalyzes the condensation of carbamoyl phosphate and aspartate to form carbamoyl aspartate and inorganic phosphate, the committed step in the de novo pyrimidine nucleotide biosynthesis pathway. The sequence is that of Aspartate carbamoyltransferase catalytic subunit from Streptococcus gordonii (strain Challis / ATCC 35105 / BCRC 15272 / CH1 / DL1 / V288).